Here is a 317-residue protein sequence, read N- to C-terminus: MSAKNGSIKLVAGNSNPALAQAIAQGLHLPLTKAVVRRFADMEIFVEIQENVRGSDAFIIQSTSFPANDHLMELLIITDALRRSSARRITAVLPYFGYARQDRKSGSRTPISAKLVANLITQAGVDRVMTLDLHAGQIQGFFDIPTDNLYAAPLMVRDIKDKFDLSKTMVISPDVGGVARARGLAKRINTPLAIVDKRRERPGESEVMNVIGDVAGYTCILVDDIVDSGGTLVNAADALIAKGAKDVYAYITHGVLSGGAAARITNSKLKELVITDSILPTDAVSKAPNIRTLPIASLISDAIARTAAEESVSSLFD.

ATP contacts are provided by residues 41–43 (DME) and 100–101 (RQ). 2 residues coordinate Mg(2+): H134 and D174. K197 is a catalytic residue. Residues R199, D223, and 227 to 231 (DSGGT) contribute to the D-ribose 5-phosphate site.

Belongs to the ribose-phosphate pyrophosphokinase family. Class I subfamily. In terms of assembly, homohexamer. It depends on Mg(2+) as a cofactor.

The protein resides in the cytoplasm. The catalysed reaction is D-ribose 5-phosphate + ATP = 5-phospho-alpha-D-ribose 1-diphosphate + AMP + H(+). Its pathway is metabolic intermediate biosynthesis; 5-phospho-alpha-D-ribose 1-diphosphate biosynthesis; 5-phospho-alpha-D-ribose 1-diphosphate from D-ribose 5-phosphate (route I): step 1/1. Involved in the biosynthesis of the central metabolite phospho-alpha-D-ribosyl-1-pyrophosphate (PRPP) via the transfer of pyrophosphoryl group from ATP to 1-hydroxyl of ribose-5-phosphate (Rib-5-P). The protein is Ribose-phosphate pyrophosphokinase of Bradyrhizobium diazoefficiens (strain JCM 10833 / BCRC 13528 / IAM 13628 / NBRC 14792 / USDA 110).